The sequence spans 1412 residues: DNA-directed RNA polymerase subunit beta' (1412 aa).

Zn(2+)-binding residues include cysteine 70, cysteine 72, cysteine 85, and cysteine 88. Aspartate 460, aspartate 462, and aspartate 464 together coordinate Mg(2+). Zn(2+)-binding residues include cysteine 819, cysteine 893, cysteine 900, and cysteine 903. The segment at 1392–1412 is disordered; the sequence is EEAFEFGTPSTPAEEPQHPAE.

Belongs to the RNA polymerase beta' chain family. As to quaternary structure, the RNAP catalytic core consists of 2 alpha, 1 beta, 1 beta' and 1 omega subunit. When a sigma factor is associated with the core the holoenzyme is formed, which can initiate transcription. It depends on Mg(2+) as a cofactor. Zn(2+) is required as a cofactor.

The catalysed reaction is RNA(n) + a ribonucleoside 5'-triphosphate = RNA(n+1) + diphosphate. Functionally, DNA-dependent RNA polymerase catalyzes the transcription of DNA into RNA using the four ribonucleoside triphosphates as substrates. The chain is DNA-directed RNA polymerase subunit beta' from Burkholderia thailandensis (strain ATCC 700388 / DSM 13276 / CCUG 48851 / CIP 106301 / E264).